The sequence spans 366 residues: Tyrosine--tRNA ligase (366 aa).

5 residues coordinate L-tyrosine: tyrosine 41, tyrosine 167, glutamine 171, aspartate 174, and glutamine 189. Positions 241–245 (KMSKS) match the 'KMSKS' region motif. Lysine 244 is a binding site for ATP.

This sequence belongs to the class-I aminoacyl-tRNA synthetase family. TyrS type 4 subfamily. In terms of assembly, homodimer.

It localises to the cytoplasm. The enzyme catalyses tRNA(Tyr) + L-tyrosine + ATP = L-tyrosyl-tRNA(Tyr) + AMP + diphosphate + H(+). Catalyzes the attachment of tyrosine to tRNA(Tyr) in a two-step reaction: tyrosine is first activated by ATP to form Tyr-AMP and then transferred to the acceptor end of tRNA(Tyr). This chain is Tyrosine--tRNA ligase, found in Saccharolobus solfataricus (strain ATCC 35092 / DSM 1617 / JCM 11322 / P2) (Sulfolobus solfataricus).